Reading from the N-terminus, the 105-residue chain is Large ribosomal subunit protein uL24 (105 aa).

The protein belongs to the universal ribosomal protein uL24 family. Part of the 50S ribosomal subunit.

Functionally, one of two assembly initiator proteins, it binds directly to the 5'-end of the 23S rRNA, where it nucleates assembly of the 50S subunit. One of the proteins that surrounds the polypeptide exit tunnel on the outside of the subunit. The protein is Large ribosomal subunit protein uL24 of Mycolicibacterium smegmatis (strain ATCC 700084 / mc(2)155) (Mycobacterium smegmatis).